A 258-amino-acid polypeptide reads, in one-letter code: 14-3-3 protein 6 (258 aa).

The segment at 238 to 258 is disordered; it reads DMQDDGTDEIKEATPKPDDNE. Basic and acidic residues predominate over residues 245–258; sequence DEIKEATPKPDDNE.

The protein belongs to the 14-3-3 family. Homodimer.

This is 14-3-3 protein 6 (TFT6) from Solanum lycopersicum (Tomato).